We begin with the raw amino-acid sequence, 218 residues long: Small ribosomal subunit protein uS3c (218 aa).

One can recognise a KH type-2 domain in the interval 43 to 118 (IKNYVQKNTK…KFNIAITKIA (76 aa)).

Belongs to the universal ribosomal protein uS3 family. In terms of assembly, part of the 30S ribosomal subunit.

The protein localises to the plastid. It localises to the chloroplast. In Coffea arabica (Arabian coffee), this protein is Small ribosomal subunit protein uS3c (rps3).